A 290-amino-acid chain; its full sequence is Phosphoribulokinase 1 (290 aa).

Residue 12 to 20 (GSSGAGTST) participates in ATP binding.

The protein belongs to the phosphoribulokinase family. Homooctamer.

The enzyme catalyses D-ribulose 5-phosphate + ATP = D-ribulose 1,5-bisphosphate + ADP + H(+). The protein operates within carbohydrate biosynthesis; Calvin cycle. Its activity is regulated as follows. Activated by NADH and inhibited by phosphoenolpyruvate. This is Phosphoribulokinase 1 (prkA) from Cereibacter sphaeroides (Rhodobacter sphaeroides).